Reading from the N-terminus, the 303-residue chain is Glycine--tRNA ligase alpha subunit (303 aa).

The protein belongs to the class-II aminoacyl-tRNA synthetase family. As to quaternary structure, tetramer of two alpha and two beta subunits.

It localises to the cytoplasm. The enzyme catalyses tRNA(Gly) + glycine + ATP = glycyl-tRNA(Gly) + AMP + diphosphate. This is Glycine--tRNA ligase alpha subunit from Erwinia tasmaniensis (strain DSM 17950 / CFBP 7177 / CIP 109463 / NCPPB 4357 / Et1/99).